Consider the following 509-residue polypeptide: Cytochrome P450 4A10 (509 aa).

A run of 2 helical transmembrane segments spans residues 15 to 35 and 121 to 141; these read LSGF…VKAV and LLAP…WFQH. Residue Glu-320 coordinates heme. Residue Ser-439 is modified to Phosphoserine. A heme-binding site is contributed by Cys-456.

This sequence belongs to the cytochrome P450 family. Heme serves as cofactor. As to expression, highly expressed in the kidneys of both genders.

The protein resides in the endoplasmic reticulum membrane. The protein localises to the microsome membrane. The enzyme catalyses an omega-methyl-long-chain fatty acid + reduced [NADPH--hemoprotein reductase] + O2 = an omega-hydroxy-long-chain fatty acid + oxidized [NADPH--hemoprotein reductase] + H2O + H(+). It catalyses the reaction dodecanoate + reduced [NADPH--hemoprotein reductase] + O2 = 12-hydroxydodecanoate + oxidized [NADPH--hemoprotein reductase] + H2O + H(+). It carries out the reaction dodecanoate + reduced [NADPH--hemoprotein reductase] + O2 = 11-hydroxydodecanoate + oxidized [NADPH--hemoprotein reductase] + H2O + H(+). The catalysed reaction is tetradecanoate + reduced [NADPH--hemoprotein reductase] + O2 = 14-hydroxytetradecanoate + oxidized [NADPH--hemoprotein reductase] + H2O + H(+). The enzyme catalyses hexadecanoate + reduced [NADPH--hemoprotein reductase] + O2 = 16-hydroxyhexadecanoate + oxidized [NADPH--hemoprotein reductase] + H2O + H(+). It catalyses the reaction (9Z)-octadecenoate + reduced [NADPH--hemoprotein reductase] + O2 = 18-hydroxy-(9Z)-octadecenoate + oxidized [NADPH--hemoprotein reductase] + H2O + H(+). It carries out the reaction (9Z,12Z)-octadecadienoate + reduced [NADPH--hemoprotein reductase] + O2 = 18-hydroxy-(9Z,12Z)-octadecadienoate + oxidized [NADPH--hemoprotein reductase] + H2O + H(+). The catalysed reaction is (9Z,12Z)-octadecadienoate + reduced [NADPH--hemoprotein reductase] + O2 = 17-hydroxy-(9Z,12Z)-octadecadienoate + oxidized [NADPH--hemoprotein reductase] + H2O + H(+). The enzyme catalyses (5Z,8Z,11Z,14Z)-eicosatetraenoate + reduced [NADPH--hemoprotein reductase] + O2 = 20-hydroxy-(5Z,8Z,11Z,14Z)-eicosatetraenoate + oxidized [NADPH--hemoprotein reductase] + H2O + H(+). It catalyses the reaction 8,9-epoxy-(5Z,11Z,14Z)-eicosatrienoate + reduced [NADPH--hemoprotein reductase] + O2 = 20-hydroxy-8,9-epoxy-(5Z,11Z,14Z)-eicosatrienoate + oxidized [NADPH--hemoprotein reductase] + H2O + H(+). A cytochrome P450 monooxygenase involved in the metabolism of fatty acids. Catalyzes predominantly the oxidation of the terminal carbon (omega-oxidation) of long-chain fatty acids. Acts as a major omega-hydroxylase for dodecanoic (lauric) acid in liver. In kidney, may play an important role in omega-hydroxylation of (5Z,8Z,11Z,14Z)-eicosatetraenoic acid (arachidonate) to 20-hydroxyeicosatetraenoic acid (20-HETE), a signaling molecule acting both as vasoconstrictive and natriuretic with overall effect on arterial blood pressure. Also participates in the formation of anti-inflammatory hydroxyepoxyeicosatrienoic acids (HEETs) in kidney by converting 8,9-epoxyeicosatrienoic acid (EET) to 20,8,9-HEET, an activator of PPARA. Displays substantially lower fatty acid omega-1 hydroxylase activity. Mechanistically, uses molecular oxygen inserting one oxygen atom into a substrate, and reducing the second into a water molecule, with two electrons provided by NADPH via cytochrome P450 reductase (CPR; NADPH-ferrihemoprotein reductase). This chain is Cytochrome P450 4A10, found in Mus musculus (Mouse).